A 330-amino-acid chain; its full sequence is uncharacterized protein (330 aa).

125-132 (GPPGCGKT) provides a ligand contact to ATP.

It belongs to the AAA ATPase family.

This is an uncharacterized protein from Sinorhizobium fredii (strain NBRC 101917 / NGR234).